Here is a 5100-residue protein sequence, read N- to C-terminus: Hemicentin-2 (5100 aa).

An N-terminal signal peptide occupies residues 1-19; it reads MTPGAQLLPLLVAISTAVA. A VWFA domain is found at 37-211; sequence DATLAFVFDV…QVSEVLKWVE (175 aa). Asparagine 330, asparagine 347, asparagine 380, asparagine 479, asparagine 526, asparagine 548, and asparagine 675 each carry an N-linked (GlcNAc...) asparagine glycan. Ig-like C2-type domains follow at residues 426–515, 517–601, 609–692, 699–782, 787–877, 882–968, 973–1058, 1063–1156, 1161–1239, 1246–1335, 1340–1437, 1442–1531, 1536–1624, 1629–1717, 1722–1810, 1825–1913, 1920–2008, 2011–2100, 2105–2189, 2196–2285, 2290–2379, 2384–2473, 2478–2566, 2571–2662, 2667–2758, 2781–2871, 2875–2964, 2971–3058, 3063–3153, 3157–3245, 3250–3340, 3345–3432, 3438–3523, 3528–3609, 3614–3702, 3707–3793, 3798–3886, 3891–3977, 3982–4067, 4071–4158, 4163–4244, 4252–4336, and 4343–4428; these read PGVP…IVIT, PPPQ…RATT, PQVS…ETVT, PSVS…IQLV, PRLT…LVVT, PQIA…VELV, PRIH…MWLS, PMIK…YVLR, PQVQ…WKLE, PHWG…AKLV, PSIR…FNLA, PSLL…FQLS, PTIW…TSLE, PTIE…YSVE, PQLL…VEVS, SAHH…KDVT, PNIE…LRVN, PRIT…VILQ, PSIL…KHFN, PAFP…QSLE, PQVT…FALS, PHLT…FSVE, PSIE…TQLS, PTIL…YHVE, PSIS…QDFN, PHEE…YELL, PPVI…KLFT, PQIS…VQLN, PSFK…FVLA, PPTF…FVVS, PQIQ…HTVN, PTIK…RNFT, PPIL…FQLT, PHIE…FRVR, PNVV…FRVE, PTIQ…LDLR, PAIA…YQVT, PTIA…MVLT, PVVK…TRLV, PPVI…VHLT, PVLT…QAVS, PVLQ…KVVT, and PVFQ…ALLA. Cysteine 449 and cysteine 497 are disulfide-bonded. 6 cysteine pairs are disulfide-bonded: cysteine 539–cysteine 588, cysteine 630–cysteine 678, cysteine 720–cysteine 766, cysteine 808–cysteine 859, cysteine 903–cysteine 952, and cysteine 994–cysteine 1042. Arginine 909, arginine 914, and arginine 915 each carry omega-N-methylarginine. Residues asparagine 1024 and asparagine 1068 are each glycosylated (N-linked (GlcNAc...) asparagine). 2 disulfide bridges follow: cysteine 1091–cysteine 1140 and cysteine 1182–cysteine 1225. The N-linked (GlcNAc...) asparagine glycan is linked to asparagine 1264. The segment at 1265–1293 is disordered; that stretch reads ASLPCPAQGTPKPRITWRRGPSSEPLNGR. The cysteines at positions 1269 and 1319 are disulfide-linked. Asparagine 1350 carries an N-linked (GlcNAc...) asparagine glycan. Cystine bridges form between cysteine 1363–cysteine 1421 and cysteine 1465–cysteine 1515. N-linked (GlcNAc...) asparagine glycosylation occurs at asparagine 1542. Cystine bridges form between cysteine 1559/cysteine 1608, cysteine 1653/cysteine 1701, cysteine 1745/cysteine 1794, and cysteine 1846/cysteine 1899. Residues asparagine 1676 and asparagine 1787 are each glycosylated (N-linked (GlcNAc...) asparagine). Asparagine 1934 is a glycosylation site (N-linked (GlcNAc...) asparagine). Intrachain disulfides connect cysteine 1941–cysteine 1990 and cysteine 2033–cysteine 2084. N-linked (GlcNAc...) asparagine glycosylation is found at asparagine 2034, asparagine 2113, and asparagine 2119. 2 disulfides stabilise this stretch: cysteine 2126/cysteine 2175 and cysteine 2218/cysteine 2269. N-linked (GlcNAc...) asparagine glycosylation is found at asparagine 2309, asparagine 2315, asparagine 2345, and asparagine 2395. Cysteine 2314 and cysteine 2363 are joined by a disulfide. Cysteine 2408 and cysteine 2457 are oxidised to a cystine. Asparagine 2469, asparagine 2502, asparagine 2541, asparagine 2606, and asparagine 2688 each carry an N-linked (GlcNAc...) asparagine glycan. Cystine bridges form between cysteine 2501-cysteine 2550 and cysteine 2597-cysteine 2646. Intrachain disulfides connect cysteine 2695–cysteine 2744 and cysteine 2806–cysteine 2855. A glycan (N-linked (GlcNAc...) asparagine) is linked at asparagine 2892. Cysteine 2901 and cysteine 2950 are oxidised to a cystine. The N-linked (GlcNAc...) asparagine glycan is linked to asparagine 2986. 5 disulfide bridges follow: cysteine 2993–cysteine 3042, cysteine 3088–cysteine 3137, cysteine 3180–cysteine 3229, cysteine 3273–cysteine 3324, and cysteine 3369–cysteine 3418. An N-linked (GlcNAc...) asparagine glycan is attached at asparagine 3430. Intrachain disulfides connect cysteine 3462-cysteine 3507, cysteine 3551-cysteine 3593, and cysteine 3637-cysteine 3686. N-linked (GlcNAc...) asparagine glycans are attached at residues asparagine 3560 and asparagine 3575. Residues asparagine 3717 and asparagine 3721 are each glycosylated (N-linked (GlcNAc...) asparagine). Residues cysteine 3728 and cysteine 3777 are joined by a disulfide bond. Asparagine 3806 carries an N-linked (GlcNAc...) asparagine glycan. Intrachain disulfides connect cysteine 3819–cysteine 3870, cysteine 3912–cysteine 3961, cysteine 4003–cysteine 4051, cysteine 4093–cysteine 4142, cysteine 4184–cysteine 4231, cysteine 4274–cysteine 4322, and cysteine 4364–cysteine 4412. Asparagine 4304 is a glycosylation site (N-linked (GlcNAc...) asparagine). A Nidogen G2 beta-barrel domain is found at 4432–4654; sequence EPRGSRGSMT…QTEENEVGCP (223 aa). N-linked (GlcNAc...) asparagine glycans are attached at residues asparagine 4455 and asparagine 4601. In terms of domain architecture, EGF-like 1; calcium-binding spans 4668–4708; it reads DKDECSGGPSPCSHTCRNAPGHFSCSCPTGFSLAWDHRNCR. 11 disulfides stabilise this stretch: cysteine 4672/cysteine 4683, cysteine 4679/cysteine 4692, cysteine 4694/cysteine 4707, cysteine 4713/cysteine 4726, cysteine 4720/cysteine 4735, cysteine 4739/cysteine 4752, cysteine 4758/cysteine 4771, cysteine 4765/cysteine 4780, cysteine 4801/cysteine 4812, cysteine 4808/cysteine 4821, and cysteine 4823/cysteine 4836. In terms of domain architecture, EGF-like 2; calcium-binding spans 4709-4753; sequence DVDECAGNTHLCQEEQRCVNLLGSYNCLASCRPGFRVTADGSNCE. Positions 4754–4789 constitute an EGF-like 3; calcium-binding domain; sequence DVDECLEQLDECHYNQLCENTPGGHHCGCPRGYRQQ. One can recognise an EGF-like 4; calcium-binding domain in the interval 4797-4837; the sequence is DINECLQLPTPCVYQCQNLQGSYRCLCPPGQTLLRDGRTCI. Asparagine 4845 carries N-linked (GlcNAc...) asparagine glycosylation. In terms of domain architecture, EGF-like 5; calcium-binding spans 4904–4943; it reads DLDECRVRSLCQHACQNTEGSYYCLCPSGYRLLPSGKNCQ. Disulfide bonds link cysteine 4908–cysteine 4918, cysteine 4914–cysteine 4927, and cysteine 4929–cysteine 4942. Asparagine 5035 carries an N-linked (GlcNAc...) asparagine glycan.

In terms of processing, reported to be phosphorylated; however as this position is extracellular, the in vivo relevance is unsure. In neonatal skin, localized in the pericellular space of basal epidermal keratinocytes (at protein level). In adult skin, restricted to basal keratinocytes of hair follicles and the interfollicular epidermis. Absent from the myotendinous junction but present in skeletal muscle (at protein level). Expressed in the pericellular extracellular matrix of epithelial cells in a number of tissues including embryonic trophectoderm and adult skin and tongue. Also present in the extracellular matrix of some, but not all, blood vessels. Expressed primarily in epithelial cells in the embryonic epidermis, lung, intestine, skeletal hindlimb muscle, tongue and the muscular layers of the esophagus.

Its subcellular location is the secreted. The protein localises to the extracellular space. The protein resides in the extracellular matrix. It localises to the cleavage furrow. The sequence is that of Hemicentin-2 (Hmcn2) from Mus musculus (Mouse).